We begin with the raw amino-acid sequence, 1265 residues long: Kinesin-like protein Klp98A (1265 aa).

Positions 3 to 364 (SLKVAVRVRP…LRYANRAKNI (362 aa)) constitute a Kinesin motor domain. An ATP-binding site is contributed by 100–107 (GQTGSGKT). 3 disordered regions span residues 597–621 (GASP…DPEL), 828–864 (EAES…DVSK), and 884–954 (VSSP…CTPS). Coiled-coil stretches lie at residues 619-670 (PELQ…EEMD) and 768-848 (AQFI…LGNK). Polar residues-rich tracts occupy residues 846–857 (GNKSMSTSTSTN), 884–901 (VSSP…SNCS), and 917–927 (SGSSEETSRTC). Over residues 933–946 (SGSGSGSVGIGGSG) the composition is skewed to gly residues. A coiled-coil region spans residues 1035–1071 (DLNKAQLDEHIADLQDLQRRYIQMEQEMLQSVQDLEA). The PX domain occupies 1129–1259 (GEHFITIPSF…SFFKKGLFEN (131 aa)).

This sequence belongs to the TRAFAC class myosin-kinesin ATPase superfamily. Kinesin family. As to quaternary structure, interacts with Atg8a and Rab14.

The protein localises to the early endosome. Its function is as follows. Plus end-directed motor protein involved in asymmetric cell division of sensory organ precursor (SOP) cells by playing a role in the asymmetric localization of Sara-expressing endosomes to the pIIa daughter cell but not to the pIIb cell. Targets Sara-expressing endosomes to the central spindle which is symmetrically arranged in early cell division. During late cytokinesis, central spindle asymmetry is generated by enrichment of Patronin on the pIIb side which protects microtubules from depolymerization by Klp10A while unprotected microtubules on the pIIa side are disassembled by Klp10A, leading to the asymmetric delivery of Sara-expressing endosomes to the pIIa daughter cell. Also plays a role in regulation of autophagosome formation, fusion and positioning and is required for normal localization of Rab14. This chain is Kinesin-like protein Klp98A, found in Drosophila melanogaster (Fruit fly).